The sequence spans 281 residues: 33 kDa chaperonin (281 aa).

Disulfide bonds link cysteine 229–cysteine 231 and cysteine 262–cysteine 265.

Belongs to the HSP33 family. Post-translationally, under oxidizing conditions two disulfide bonds are formed involving the reactive cysteines. Under reducing conditions zinc is bound to the reactive cysteines and the protein is inactive.

The protein localises to the cytoplasm. Functionally, redox regulated molecular chaperone. Protects both thermally unfolding and oxidatively damaged proteins from irreversible aggregation. Plays an important role in the bacterial defense system toward oxidative stress. The protein is 33 kDa chaperonin of Pseudoalteromonas translucida (strain TAC 125).